The sequence spans 211 residues: tRNA (guanine-N(7)-)-methyltransferase (211 aa).

S-adenosyl-L-methionine contacts are provided by Asp-40, Glu-65, Asn-92, and Asp-118. Residue Asp-118 is part of the active site. Residues Lys-122 and Asp-154 each coordinate substrate.

This sequence belongs to the class I-like SAM-binding methyltransferase superfamily. TrmB family.

The enzyme catalyses guanosine(46) in tRNA + S-adenosyl-L-methionine = N(7)-methylguanosine(46) in tRNA + S-adenosyl-L-homocysteine. The protein operates within tRNA modification; N(7)-methylguanine-tRNA biosynthesis. In terms of biological role, catalyzes the formation of N(7)-methylguanine at position 46 (m7G46) in tRNA. The sequence is that of tRNA (guanine-N(7)-)-methyltransferase from Microcystis aeruginosa (strain NIES-843 / IAM M-2473).